Consider the following 317-residue polypeptide: Inositol oxygenase 4 (317 aa).

Substrate is bound by residues Arg-58 and Asp-115–Ser-117. Residues His-128, His-153, and Asp-154 each coordinate Fe cation. Substrate is bound by residues Lys-157 and Gly-174 to Asp-175. 3 residues coordinate Fe cation: His-226, His-252, and Asp-285. His-252–Ser-253 is a substrate binding site.

The protein belongs to the myo-inositol oxygenase family. The cofactor is Fe cation. Expressed in flowers, leaves, siliques, and to a lesser extent in roots.

It localises to the cytoplasm. It catalyses the reaction myo-inositol + O2 = D-glucuronate + H2O + H(+). It functions in the pathway polyol metabolism; myo-inositol degradation into D-glucuronate; D-glucuronate from myo-inositol: step 1/1. Functionally, catalyzes the oxygenative cleavage of myo-inositol to D-glucuronate. Involved in the biosynthesis of UDP-glucuronic acid (UDP-GlcA), providing nucleotide sugars for cell-wall polymers. May be also involved in plant ascorbate biosynthesis. The chain is Inositol oxygenase 4 (MIOX4) from Arabidopsis thaliana (Mouse-ear cress).